Here is a 90-residue protein sequence, read N- to C-terminus: Acylphosphatase (90 aa).

The Acylphosphatase-like domain maps to 3–88; sequence TWHMTAHGRV…GKFEDFDLRP (86 aa). Catalysis depends on residues Arg-18 and Asn-36.

Belongs to the acylphosphatase family.

It catalyses the reaction an acyl phosphate + H2O = a carboxylate + phosphate + H(+). This Cupriavidus pinatubonensis (strain JMP 134 / LMG 1197) (Cupriavidus necator (strain JMP 134)) protein is Acylphosphatase (acyP).